We begin with the raw amino-acid sequence, 217 residues long: Adapter protein MecA (217 aa).

This sequence belongs to the MecA family. In terms of assembly, homodimer.

Enables the recognition and targeting of unfolded and aggregated proteins to the ClpC protease or to other proteins involved in proteolysis. In Listeria welshimeri serovar 6b (strain ATCC 35897 / DSM 20650 / CCUG 15529 / CIP 8149 / NCTC 11857 / SLCC 5334 / V8), this protein is Adapter protein MecA.